Here is a 156-residue protein sequence, read N- to C-terminus: Small ribosomal subunit protein uS7 (156 aa).

It belongs to the universal ribosomal protein uS7 family. As to quaternary structure, part of the 30S ribosomal subunit. Contacts proteins S9 and S11.

Functionally, one of the primary rRNA binding proteins, it binds directly to 16S rRNA where it nucleates assembly of the head domain of the 30S subunit. Is located at the subunit interface close to the decoding center, probably blocks exit of the E-site tRNA. The chain is Small ribosomal subunit protein uS7 from Colwellia psychrerythraea (strain 34H / ATCC BAA-681) (Vibrio psychroerythus).